The primary structure comprises 60 residues: Three-finger toxin Mnn I (60 aa).

4 cysteine pairs are disulfide-bonded: Cys-3-Cys-22, Cys-17-Cys-39, Cys-41-Cys-52, and Cys-53-Cys-58.

This sequence belongs to the three-finger toxin family. Short-chain subfamily. Type I alpha-neurotoxin sub-subfamily. In terms of tissue distribution, expressed by the venom gland.

Its subcellular location is the secreted. Binds to muscle nicotinic acetylcholine receptor (nAChR) and inhibit acetylcholine from binding to the receptor, thereby impairing neuromuscular transmission. The polypeptide is Three-finger toxin Mnn I (Micrurus nigrocinctus (Central American coral snake)).